The chain runs to 201 residues: Dephospho-CoA kinase (201 aa).

The DPCK domain occupies 3–201; that stretch reads WIGLTGGIAC…KWLEELKNQN (199 aa). 11-16 serves as a coordination point for ATP; sequence ACGKST.

This sequence belongs to the CoaE family.

The protein localises to the cytoplasm. The enzyme catalyses 3'-dephospho-CoA + ATP = ADP + CoA + H(+). It participates in cofactor biosynthesis; coenzyme A biosynthesis; CoA from (R)-pantothenate: step 5/5. In terms of biological role, catalyzes the phosphorylation of the 3'-hydroxyl group of dephosphocoenzyme A to form coenzyme A. This Bdellovibrio bacteriovorus (strain ATCC 15356 / DSM 50701 / NCIMB 9529 / HD100) protein is Dephospho-CoA kinase.